The primary structure comprises 501 residues: Aspartyl/glutamyl-tRNA(Asn/Gln) amidotransferase subunit B (501 aa).

Residues 276–299 (HYQEADGSTSKGRPKETAEDYRYF) form a disordered region. Residues 288-299 (RPKETAEDYRYF) show a composition bias toward basic and acidic residues.

It belongs to the GatB/GatE family. GatB subfamily. As to quaternary structure, heterotrimer of A, B and C subunits.

It carries out the reaction L-glutamyl-tRNA(Gln) + L-glutamine + ATP + H2O = L-glutaminyl-tRNA(Gln) + L-glutamate + ADP + phosphate + H(+). The catalysed reaction is L-aspartyl-tRNA(Asn) + L-glutamine + ATP + H2O = L-asparaginyl-tRNA(Asn) + L-glutamate + ADP + phosphate + 2 H(+). In terms of biological role, allows the formation of correctly charged Asn-tRNA(Asn) or Gln-tRNA(Gln) through the transamidation of misacylated Asp-tRNA(Asn) or Glu-tRNA(Gln) in organisms which lack either or both of asparaginyl-tRNA or glutaminyl-tRNA synthetases. The reaction takes place in the presence of glutamine and ATP through an activated phospho-Asp-tRNA(Asn) or phospho-Glu-tRNA(Gln). This chain is Aspartyl/glutamyl-tRNA(Asn/Gln) amidotransferase subunit B, found in Corynebacterium glutamicum (strain R).